A 156-amino-acid chain; its full sequence is Small ribosomal subunit protein uS7 (156 aa).

Belongs to the universal ribosomal protein uS7 family. As to quaternary structure, part of the 30S ribosomal subunit. Contacts proteins S9 and S11.

Its function is as follows. One of the primary rRNA binding proteins, it binds directly to 16S rRNA where it nucleates assembly of the head domain of the 30S subunit. Is located at the subunit interface close to the decoding center, probably blocks exit of the E-site tRNA. This is Small ribosomal subunit protein uS7 from Acidobacterium capsulatum (strain ATCC 51196 / DSM 11244 / BCRC 80197 / JCM 7670 / NBRC 15755 / NCIMB 13165 / 161).